Reading from the N-terminus, the 288-residue chain is Syntaxin-1A (288 aa).

The Cytoplasmic segment spans residues 1–265 (MKDRTQELRT…KYQSKARRKK (265 aa)). Residues S14, S64, and S95 each carry the phosphoserine modification. Residues 68 to 109 (DEKTKEELEELMSDIKKTANKVRSKLKSIEQSIEQEEGLNRS) are a coiled coil. The residue at position 188 (S188) is a Phosphoserine; by DAPK1. The t-SNARE coiled-coil homology domain occupies 192–254 (LSEIETRHSE…ERAVSDTKKA (63 aa)). Glycyl lysine isopeptide (Lys-Gly) (interchain with G-Cter in SUMO) cross-links involve residues K252, K253, and K256. Residues 266 to 286 (IMIIICCVIPGIVIASTVGGI) traverse the membrane as a helical; Anchor for type IV membrane protein segment. At 287–288 (FA) the chain is on the extracellular side.

It belongs to the syntaxin family. In terms of assembly, part of the SNARE core complex containing SNAP25, VAMP2 and STX1A; this complex constitutes the basic catalytic machinery of the complex neurotransmitter release apparatus. The SNARE complex interacts with CPLX1. Interacts with STXBP1. The interaction with STXBP1 promotes assembly of the SNARE complex. Interacts (via C-terminus) with KCNB1 (via C-terminus); the interaction increases in a calcium-dependent manner and induces a pore-independent enhancement of exocytosis in neuroendocrine cells, chromaffin cells, pancreatic beta cells and from the soma of dorsal root ganglia (DRG) neurons. Interacts with SYTL4. Interacts with STXBP6. Interacts with PLCL1 (via C2 domain). Interacts with OTOF. Interacts with LGI3. Interacts (via the H3 domain) with SLC6A4 (via the N-terminus); this interaction regulates SLC4A6 channel conductance in thalamocortical neurons. Interacts with SYT6 and SYT8; the interaction is Ca(2+)-dependent. Interacts with VAMP8. Interacts with SNAP23. Interacts with VAPA and SYBU. Interacts with PRRT2. Interacts with SEPT8. Interacts with STXBP5L. Interacts with synaptotagmin-1/SYT1. Interacts with SEPTIN5; in the cerebellar cortex. Interacts with SEPTIN4; in the striatum. Post-translationally, phosphorylated by CK2. Phosphorylation at Ser-188 by DAPK1 significantly decreases its interaction with STXBP1. Sumoylated, sumoylation is required for regulation of synaptic vesicle endocytosis.

It localises to the cytoplasmic vesicle. Its subcellular location is the secretory vesicle. It is found in the synaptic vesicle membrane. The protein localises to the cell membrane. The protein resides in the synapse. It localises to the synaptosome. Plays an essential role in hormone and neurotransmitter calcium-dependent exocytosis and endocytosis. Part of the SNARE (Soluble NSF Attachment Receptor) complex composed of SNAP25, STX1A and VAMP2 which mediates the fusion of synaptic vesicles with the presynaptic plasma membrane. STX1A and SNAP25 are localized on the plasma membrane while VAMP2 resides in synaptic vesicles. The pairing of the three SNAREs from the N-terminal SNARE motifs to the C-terminal anchors leads to the formation of the SNARE complex, which brings membranes into close proximity and results in final fusion. Participates in the calcium-dependent regulation of acrosomal exocytosis in sperm. Also plays an important role in the exocytosis of hormones such as insulin or glucagon-like peptide 1 (GLP-1). The chain is Syntaxin-1A (STX1A) from Pongo abelii (Sumatran orangutan).